A 253-amino-acid polypeptide reads, in one-letter code: TasA anchoring/assembly protein (253 aa).

A signal peptide spans Met1–Ala32. Residues Thr50–Thr57 form an important for TasA fiber formation region. A compositionally biased stretch (basic and acidic residues) spans Glu190–Ser241. Residues Glu190–Gln253 form a disordered region.

The protein localises to the secreted. It localises to the cell wall. Its function is as follows. Required for biofilm formation. Required for the proper anchoring and polymerization of TasA amyloid fibers at the cell surface. Is also a minor component of TasA fibers. The chain is TasA anchoring/assembly protein from Bacillus subtilis (strain 168).